We begin with the raw amino-acid sequence, 197 residues long: Probable nicotinate-nucleotide adenylyltransferase (197 aa).

The protein belongs to the NadD family.

The enzyme catalyses nicotinate beta-D-ribonucleotide + ATP + H(+) = deamido-NAD(+) + diphosphate. Its pathway is cofactor biosynthesis; NAD(+) biosynthesis; deamido-NAD(+) from nicotinate D-ribonucleotide: step 1/1. In terms of biological role, catalyzes the reversible adenylation of nicotinate mononucleotide (NaMN) to nicotinic acid adenine dinucleotide (NaAD). The sequence is that of Probable nicotinate-nucleotide adenylyltransferase from Bordetella parapertussis (strain 12822 / ATCC BAA-587 / NCTC 13253).